We begin with the raw amino-acid sequence, 146 residues long: MFAVIKTGGRQYRVVPDDVLEIGKIAGEVGTIVQLGEVLVLGGDTPVLGAPTVAGASIAAEVLQHKRGPKVIAFKKRRRKHSKRKRGYRDEITVLRVTEILADGKSPTIGPRPKKEKAVEPVEGASDDKPRRAAKKTAAKTAEDAD.

The interval 103–146 (DGKSPTIGPRPKKEKAVEPVEGASDDKPRRAAKKTAAKTAEDAD) is disordered. Over residues 116 to 131 (EKAVEPVEGASDDKPR) the composition is skewed to basic and acidic residues.

Belongs to the bacterial ribosomal protein bL21 family. In terms of assembly, part of the 50S ribosomal subunit. Contacts protein L20.

Functionally, this protein binds to 23S rRNA in the presence of protein L20. This is Large ribosomal subunit protein bL21 from Nitrobacter winogradskyi (strain ATCC 25391 / DSM 10237 / CIP 104748 / NCIMB 11846 / Nb-255).